A 237-amino-acid polypeptide reads, in one-letter code: Orotidine 5'-phosphate decarboxylase (237 aa).

Residues aspartate 11, lysine 34, 61-70, threonine 124, arginine 186, glutamine 195, glycine 215, and arginine 216 contribute to the substrate site; that span reads DLKLHDIPNT. Lysine 63 functions as the Proton donor in the catalytic mechanism.

It belongs to the OMP decarboxylase family. Type 1 subfamily. As to quaternary structure, homodimer.

It catalyses the reaction orotidine 5'-phosphate + H(+) = UMP + CO2. It participates in pyrimidine metabolism; UMP biosynthesis via de novo pathway; UMP from orotate: step 2/2. In terms of biological role, catalyzes the decarboxylation of orotidine 5'-monophosphate (OMP) to uridine 5'-monophosphate (UMP). The protein is Orotidine 5'-phosphate decarboxylase of Lactococcus lactis subsp. lactis (strain IL1403) (Streptococcus lactis).